A 3391-amino-acid polypeptide reads, in one-letter code: MNDQRKEAKNTPFNMLKRERNRVSTVQQLTKRFSLGMLQGRGPLKLYMALVAFLRFLTIPPTAGILKRWGTIKKSKAINVLRGFRKEIGRMLNILNRRRRSAGMIIMLIPTVMAFHLTTRNGEPHMIVSRQEKGKSLLFKTEVGVNMCTLMAMDLGELCEDTITYKCPLLRQNEPEDIDCWCNSTSTWVTYGTCTTMGEHRREKRSVALVPHVGMGLETRTETWMSSEGAWKHVQRIETWILRHPGFTMMAAILAYTIGTTHFQRALILILLTAVTPSMTMRCIGMSNRDFVEGVSGGSWVDIVLEHGSCVTTMAKNKPTLDFELIKTEAKQPATLRKYCIEAKLTNTTTESRCPTQGEPSLNEEQDKRFVCKHSMVDRGWGNGCGLFGKGGIVTCAMFRCKKNMEGKVVQPENLEYTIVITPHSGEEHAVGNDTGKHGKEIKITPQSSITEAELTGYGTITMECSPRTGLDFNEIVLLQMENKAWLVHRQWFLDLPLPWLPGADTQGSNWIQKETLVTFKNPHAKKQDVVVLGSQEGAMHTALTGATEIQMSSGNLLFTGHLKCRLRMDKLQLKGMSYSMCTGKFKVVKEIAETQHGTIVIRVQYEGDGSPCKIPFEIMDLEKRHVLGRLITVNPIVTEKDSPVNIEAEPPFGDSYIIIGVEPGQLKLNWFKKGSSIGQMFETTMRGAKRMAILGDTAWDFGSLGGVFTSIGKALHQVFGAIYGAAFSGVSWTMKILIGVIITWIGMNSRSTSLSVTLVLVGIVTLYLGVMVQADSGCVVSWKNKELKCGSGIFITDNVHTWTEQYKFQPESPSKLASAIQKAHEEDICGIRSVTRLENLMWKQITPELNHILSENEVKLTIMTGDIKGIMQAGKRSLRPQPTELKYSWKTWGKAKMLSTESHNQTFFIDGPETAECPNTNRAWNSLEVEDYGFGVFTTNIWLKLKEKQDVFCDSKLMSAAIKDNRAVHADMGYWIESALNDTWKIEKASFIEVKNCHWPKSHTLWSNGVLESEMIIPKNLAGPVSKHNYRPGYHTQITGPWHLGKLEMDFDFCDGTTVVVTEDCGNRGPSLRTTTASGKLITEWCCRSCTLPPLRYRGEDGCWYGMEIRPLKEKEENLVNSLVTAGHGQVDNFSLGVLGMALFLEEMLRTRVGTKHAILLVAVSFVTLIIGNRSFRDLGRVMVMVGATMTDDIGMGVTYLALLAAFKVRPTFAAGLLLRKLTSKELMMTTIGIVLSSQSTIPETILELTDALALGMMVLKMVRNMEKYQLAVTIMAILCVPNAVILQNAWKVSCTILAVVSVSPLFLTSSQQKTDWIPLALTIKGLNPTAIFLTTLSRTSKKRSWPLNEAIMAVGMVSILASSLLKNDIPMTGPLVAGGLLTVCYVLTGRSADLELERAADVKWEDQAEISGSSPILSITISEDGSMSIKNEEEEQTLTILIRRGLLVISGLFPVSIPITAAAWYLWEVKKQRAGVLWDVPSPPPMGKAELEDGAYRIKQKGILGYSQIGAGVYKEGTFHTMWHVTRGAVLMHKGKRIEPSWADVKKDLISYGGGWKLEGEWKEGEEVQVLALDPGKNPRAVQTKPGLFKTNAGTIGAVSLDFSPGTSGSPIIDKKGKVVGLYGNGVVTRSGAYVSAIAQTEKSIEDNPEIEDDIFRKRRLTIMDLHPGAGKTKRYLPAIVREAIKRGLRTLILAPTRVVAAEMEEALRGLPIRYQTPAIRAEHTGREIVDLMCHATFTMRLLSPVRVPNYNLIIMDEAHFTDPASIAARGYISTRVEMGEAAGIFMTATPPGSRDPFPQSNAPIIDEEREIPERSWNSGHEWVTDFKGKTVWFVPSIKAGNDIAACLRKNGKKVIQLSRKTFDSEYVKTRTNDWDFVVTTDISEMGANFKAERVIDPRRCMKPVILTDGEERVILAGPMPVTHSSAAQRRGRIGRNPKNENDQYIYMGEPLENDEDCAHWKEAKMLLDNINTPEGIIPSMFEPEREKVDAIDGEYRLRGEARTTFVDLMRRGDLPVWLAYRVAAEGINYADRRWCFDGVKNNQILEENVEVEIWTKEGERKKLKPRWLDARIYSDPLALKEFKEFAAGRKSLTLNLITEMGRLPTFMTQKARNALDNLAVLHTAEAGGRAYNHALSELPETLETLLLLTLLATVTGGIFLFLMSARGIGKMTLGMCCIITASILLWYAQIQPHWIAASIILEFFLIVLLIPEPEKQRTPQDNQLTYVVIAILTVVAATMANEMGFLEKTKKDLGLGSIATQQPESNILDIDLRPASAWTLYAVATTFVTPMLRHSIENSSVNVSLTAIANQATVLMGLGKGWPLSKMDIGVPLLAIGCYSQVNPTTLTAALFLLVAHYAIIGPALQAKASREAQKRAAAGIMKNPTVDGITVIDLDPIPYDPKFEKQLGQVMLLVLCVTQVLMMRTTWALCEALTLATGPISTLSEGNPGRFWNTTIAVSMANIFRGSYLAGAGLLFSIMKNTTNTRRVTGNIGETLGEKWKSRLNALGKSEFQIYKKSGIQEVDRTLAKEGIKRGETDHHAVSRGSAKLRWFVERNMVTPEGKVVDLGCGRGGWSYYCGGLKNVREVKGLTKGGPGHEEPIPMSTYGWNLVRLQSGVDVFFIPPEKCDTLLCDIGESSPNPTVEAGRTLRVLNLVENWLNNNTQFCIKVLNPYMPSVIEKMEALQRKYGGALVRNPLSRNSTHEMYWVSNASGNIVSSVNMISRMLINRFTMRYKKATYEPDVDLGSGTRNIGIESEIPNLDIIGKRIEKIKQEHETSWHYDQDHPYKTWAYHGSYETKQTGSASSMVNGVFRLLTKPWDVVPMVTQMAMTDTTPFGQQRVFKEKVDTRTQEPKEGTKKLMKITAEWLWKELGKKKTPRMCTREEFTRKVRSNAALGAIFTDENKWKSAREAVEDSRFWELVDKERNLHLEGKCETCVYNIMGKREKKLGEFGKAKGSRAIWYMWLGARFLEFEALGFLNEDHWFSRENSLSGVEGEGLHKLGYILRDVSKKEGGAMYADDTAGWDTRITLEDLKNEEMVTNHMEGEHKKLAEAIFKLTYQNKVVRVQRPTPRGTVMDIISRRDQRGSGQVGTYGLNTFTNMEAQLIRQMEGEGVFKSIQHLTITEEIAVQNWLARVGRERLSRMAISGDDCVVKPLDDRLPSALTALNDMGKIRKDIQQWEPSRGWNDWTQVPFCSHHFHELIMKDGRVLVVPCRNQDELIGRARISQGAGWSLRETACLGKSYAQMWSLMYFHRRDLRLAANAICSAVPSHWVPTSRTTWSIHAKHEWMTTEDMLTVWNRVWIQENPWMEDKTPVESWEEIPYLGKREDQWCGSLIGLTSRATWAKNIQAAINQVRSLIGNEEYTDYMPSMKRFRREEEEAGVLW.

An interaction with host EXOC1 region spans residues 1–15; that stretch reads MNDQRKEAKNTPFNM. The Cytoplasmic portion of the chain corresponds to 1-101; that stretch reads MNDQRKEAKN…LNILNRRRRS (101 aa). The segment at 37-72 is hydrophobic; homodimerization of capsid protein C; the sequence is MLQGRGPLKLYMALVAFLRFLTIPPTAGILKRWGTI. A propeptide spans 101 to 114 (ER anchor for the Capsid protein C, removed in mature form by serine protease NS3); that stretch reads SAGMIIMLIPTVMA. Positions 101 to 114 are cleaved as a propeptide — ER anchor for the capsid protein C, removed in mature form by serine protease NS3; sequence SAGMIIMLIPTVMA. The chain crosses the membrane as a helical span at residues 102–122; it reads AGMIIMLIPTVMAFHLTTRNG. The Extracellular portion of the chain corresponds to 123–242; it reads EPHMIVSRQE…HVQRIETWIL (120 aa). Asparagine 183 is a glycosylation site (N-linked (GlcNAc...) asparagine; by host). A helical transmembrane segment spans residues 243 to 260; sequence RHPGFTMMAAILAYTIGT. Residue threonine 261 is a topological domain, cytoplasmic. A helical transmembrane segment spans residues 262 to 280; it reads HFQRALILILLTAVTPSMT. The Extracellular segment spans residues 281 to 727; it reads MRCIGMSNRD…QVFGAIYGAA (447 aa). 4 cysteine pairs are disulfide-bonded: cysteine 283–cysteine 310, cysteine 340–cysteine 401, cysteine 354–cysteine 385, and cysteine 372–cysteine 396. Asparagine 347 carries an N-linked (GlcNAc...) asparagine; by host glycan. The tract at residues 378-391 is fusion peptide; that stretch reads DRGWGNGCGLFGKG. Residue asparagine 433 is glycosylated (N-linked (GlcNAc...) asparagine; by host). Disulfide bonds link cysteine 465–cysteine 565 and cysteine 582–cysteine 613. Residues 728–748 traverse the membrane as a helical segment; the sequence is FSGVSWTMKILIGVIITWIGM. The Cytoplasmic portion of the chain corresponds to 749–752; it reads NSRS. The helical transmembrane segment at 753–773 threads the bilayer; it reads TSLSVTLVLVGIVTLYLGVMV. At 774–1195 the chain is on the extracellular side; sequence QADSGCVVSW…MVGATMTDDI (422 aa). Cystine bridges form between cysteine 779–cysteine 790, cysteine 830–cysteine 918, cysteine 954–cysteine 998, cysteine 1055–cysteine 1104, cysteine 1066–cysteine 1088, and cysteine 1087–cysteine 1091. 2 N-linked (GlcNAc...) asparagine; by host glycosylation sites follow: asparagine 905 and asparagine 982. Asparagine 1134 carries an N-linked (GlcNAc...) asparagine; by host glycan. Residues 1196 to 1220 form a helical membrane-spanning segment; the sequence is GMGVTYLALLAAFKVRPTFAAGLLL. Topologically, residues 1221–1226 are cytoplasmic; the sequence is RKLTSK. Residues 1227 to 1245 traverse the membrane as a helical segment; sequence ELMMTTIGIVLSSQSTIPE. Over 1246 to 1269 the chain is Lumenal; it reads TILELTDALALGMMVLKMVRNMEK. A helical membrane pass occupies residues 1270-1290; that stretch reads YQLAVTIMAILCVPNAVILQN. Residue alanine 1291 is a topological domain, cytoplasmic. The helical transmembrane segment at 1292–1310 threads the bilayer; sequence WKVSCTILAVVSVSPLFLT. The Lumenal portion of the chain corresponds to 1311-1317; it reads SSQQKTD. A helical transmembrane segment spans residues 1318–1338; it reads WIPLALTIKGLNPTAIFLTTL. Over 1339 to 1346 the chain is Cytoplasmic; it reads SRTSKKRS. Residues 1347–1367 traverse the membrane as a helical segment; it reads WPLNEAIMAVGMVSILASSLL. Residues 1368–1370 are Lumenal-facing; it reads KND. A helical transmembrane segment spans residues 1371–1391; sequence IPMTGPLVAGGLLTVCYVLTG. Residues 1392–1447 are Cytoplasmic-facing; the sequence is RSADLELERAADVKWEDQAEISGSSPILSITISEDGSMSIKNEEEEQTLTILIRRG. The interacts with and activates NS3 protease stretch occupies residues 1398–1437; that stretch reads LERAADVKWEDQAEISGSSPILSITISEDGSMSIKNEEEE. Residues 1448 to 1468 constitute an intramembrane region (helical); it reads LLVISGLFPVSIPITAAAWYL. Over 1469-2147 the chain is Cytoplasmic; the sequence is WEVKKQRAGV…LSELPETLET (679 aa). A Peptidase S7 domain is found at 1476-1653; that stretch reads AGVLWDVPSP…EKSIEDNPEI (178 aa). Active-site charge relay system; for serine protease NS3 activity residues include histidine 1526, aspartate 1550, and serine 1610. Residues 1655 to 1811 enclose the Helicase ATP-binding domain; sequence DDIFRKRRLT…QSNAPIIDEE (157 aa). The interval 1659–1662 is important for RNA-binding; the sequence is RKRR. Residue 1668–1675 coordinates ATP; the sequence is LHPGAGKT. A DEAH box motif is present at residues 1759-1762; it reads DEAH. A Helicase C-terminal domain is found at 1821 to 1988; it reads SGHEWVTDFK…IIPSMFEPER (168 aa). An N6-acetyllysine; by host modification is found at lysine 1863. The chain crosses the membrane as a helical span at residues 2148–2168; it reads LLLLTLLATVTGGIFLFLMSA. The Lumenal portion of the chain corresponds to 2169-2170; sequence RG. Residues 2171–2191 constitute an intramembrane region (helical); that stretch reads IGKMTLGMCCIITASILLWYA. Position 2192 (glutamine 2192) is a topological domain, lumenal. A helical transmembrane segment spans residues 2193–2213; the sequence is IQPHWIAASIILEFFLIVLLI. Residues 2214–2228 are Cytoplasmic-facing; it reads PEPEKQRTPQDNQLT. A helical membrane pass occupies residues 2229–2249; it reads YVVIAILTVVAATMANEMGFL. Topologically, residues 2250 to 2274 are lumenal; the sequence is EKTKKDLGLGSIATQQPESNILDID. The helical intramembrane region spans 2275–2295; that stretch reads LRPASAWTLYAVATTFVTPML. The Lumenal portion of the chain corresponds to 2296–2316; that stretch reads RHSIENSSVNVSLTAIANQAT. Residues asparagine 2301 and asparagine 2305 are each glycosylated (N-linked (GlcNAc...) asparagine; by host). Residues 2317 to 2337 constitute an intramembrane region (helical); that stretch reads VLMGLGKGWPLSKMDIGVPLL. Residues 2338 to 2347 lie on the Lumenal side of the membrane; sequence AIGCYSQVNP. The helical transmembrane segment at 2348–2368 threads the bilayer; sequence TTLTAALFLLVAHYAIIGPAL. At 2369–2413 the chain is on the cytoplasmic side; that stretch reads QAKASREAQKRAAAGIMKNPTVDGITVIDLDPIPYDPKFEKQLGQ. The helical transmembrane segment at 2414–2434 threads the bilayer; the sequence is VMLLVLCVTQVLMMRTTWALC. The Lumenal portion of the chain corresponds to 2435–2459; sequence EALTLATGPISTLSEGNPGRFWNTT. The N-linked (GlcNAc...) asparagine; by host glycan is linked to asparagine 2457. A helical transmembrane segment spans residues 2460–2480; sequence IAVSMANIFRGSYLAGAGLLF. The Cytoplasmic segment spans residues 2481–3391; the sequence is SIMKNTTNTR…REEEEAGVLW (911 aa). The mRNA cap 0-1 NS5-type MT domain maps to 2493-2755; the sequence is TGNIGETLGE…DVDLGSGTRN (263 aa). Serine 2547 provides a ligand contact to S-adenosyl-L-methionine. Position 2547 is a phosphoserine (serine 2547). Lysine 2552 acts as the For 2'-O-MTase activity in catalysis. Residues 2568 to 2571 carry the SUMO-interacting motif motif; sequence VVDL. S-adenosyl-L-methionine contacts are provided by glycine 2577, tryptophan 2578, threonine 2595, lysine 2596, aspartate 2622, and valine 2623. The active-site For 2'-O-MTase activity is aspartate 2637. Residue isoleucine 2638 coordinates S-adenosyl-L-methionine. Catalysis depends on for 2'-O-MTase activity residues lysine 2672 and glutamate 2708. Residue tyrosine 2710 coordinates S-adenosyl-L-methionine. Residues glutamate 2929, histidine 2933, cysteine 2938, and cysteine 2941 each contribute to the Zn(2+) site. The 150-residue stretch at 3020 to 3169 folds into the RdRp catalytic domain; sequence AMYADDTAGW…PLDDRLPSAL (150 aa). Zn(2+) is bound by residues histidine 3203, cysteine 3219, and cysteine 3338.

It in the N-terminal section; belongs to the class I-like SAM-binding methyltransferase superfamily. mRNA cap 0-1 NS5-type methyltransferase family. In terms of assembly, homodimer. Interacts (via N-terminus) with host EXOC1 (via C-terminus); this interaction results in EXOC1 degradation through the proteasome degradation pathway. As to quaternary structure, forms heterodimers with envelope protein E in the endoplasmic reticulum and Golgi. Homodimer; in the endoplasmic reticulum and Golgi. Interacts with protein prM. Interacts with non-structural protein 1. In terms of assembly, homodimer; Homohexamer when secreted. Interacts with envelope protein E. Interacts with host PRKAA1. As to quaternary structure, interacts (via N-terminus) with serine protease NS3. Forms a heterodimer with serine protease NS3. May form homooligomers. In terms of assembly, forms a heterodimer with NS2B. Interacts with NS4B. Interacts with unphosphorylated RNA-directed RNA polymerase NS5; this interaction stimulates RNA-directed RNA polymerase NS5 guanylyltransferase activity. Interacts with host SHFL. As to quaternary structure, interacts with host MAVS; this interaction inhibits the synthesis of IFN-beta. Interacts with host SHFL. Interacts with host AUP1; the interaction occurs in the presence of Dengue virus NS4B and induces lipophagy which facilitates production of virus progeny particles. May interact with host SRPRA and SEC61G. Interacts with serine protease NS3. In terms of assembly, homodimer. Interacts with host STAT2; this interaction inhibits the phosphorylation of the latter, and, when all viral proteins are present (polyprotein), targets STAT2 for degradation. Interacts with serine protease NS3. Interacts with host PAF1 complex; the interaction may prevent the recruitment of the PAF1 complex to interferon-responsive genes, and thus reduces the immune response. In terms of processing, specific enzymatic cleavages in vivo yield mature proteins. Cleavages in the lumen of endoplasmic reticulum are performed by host signal peptidase, whereas cleavages in the cytoplasmic side are performed by serine protease NS3. Signal cleavage at the 2K-4B site requires a prior NS3 protease-mediated cleavage at the 4A-2K site. Post-translationally, cleaved in post-Golgi vesicles by a host furin, releasing the mature small envelope protein M, and peptide pr. This cleavage is incomplete as up to 30% of viral particles still carry uncleaved prM. N-glycosylated. In terms of processing, N-glycosylated. The excreted form is glycosylated and this is required for efficient secretion of the protein from infected cells. Post-translationally, acetylated by host KAT5. Acetylation modulates NS3 RNA-binding and unwinding activities and plays an important positive role for viral replication. Sumoylation of RNA-directed RNA polymerase NS5 increases NS5 protein stability allowing proper viral RNA replication. In terms of processing, phosphorylated on serines residues. This phosphorylation may trigger NS5 nuclear localization.

The protein localises to the virion. It is found in the host nucleus. It localises to the host cytoplasm. Its subcellular location is the host perinuclear region. The protein resides in the secreted. The protein localises to the virion membrane. It is found in the host endoplasmic reticulum membrane. It localises to the host mitochondrion. The catalysed reaction is Selective hydrolysis of -Xaa-Xaa-|-Yaa- bonds in which each of the Xaa can be either Arg or Lys and Yaa can be either Ser or Ala.. It catalyses the reaction RNA(n) + a ribonucleoside 5'-triphosphate = RNA(n+1) + diphosphate. The enzyme catalyses a ribonucleoside 5'-triphosphate + H2O = a ribonucleoside 5'-diphosphate + phosphate + H(+). It carries out the reaction ATP + H2O = ADP + phosphate + H(+). The catalysed reaction is a 5'-end (5'-triphosphoguanosine)-ribonucleoside in mRNA + S-adenosyl-L-methionine = a 5'-end (N(7)-methyl 5'-triphosphoguanosine)-ribonucleoside in mRNA + S-adenosyl-L-homocysteine. It catalyses the reaction a 5'-end (N(7)-methyl 5'-triphosphoguanosine)-ribonucleoside in mRNA + S-adenosyl-L-methionine = a 5'-end (N(7)-methyl 5'-triphosphoguanosine)-(2'-O-methyl-ribonucleoside) in mRNA + S-adenosyl-L-homocysteine + H(+). Its function is as follows. Plays a role in virus budding by binding to the cell membrane and gathering the viral RNA into a nucleocapsid that forms the core of a mature virus particle. During virus entry, may induce genome penetration into the host cytoplasm after hemifusion induced by the surface proteins. Can migrate to the cell nucleus where it modulates host functions. Overcomes the anti-viral effects of host EXOC1 by sequestering and degrading the latter through the proteasome degradation pathway. Functionally, inhibits RNA silencing by interfering with host Dicer. In terms of biological role, prevents premature fusion activity of envelope proteins in trans-Golgi by binding to envelope protein E at pH6.0. After virion release in extracellular space, gets dissociated from E dimers. Acts as a chaperone for envelope protein E during intracellular virion assembly by masking and inactivating envelope protein E fusion peptide. prM is the only viral peptide matured by host furin in the trans-Golgi network probably to avoid catastrophic activation of the viral fusion activity in acidic Golgi compartment prior to virion release. prM-E cleavage is inefficient, and many virions are only partially matured. These uncleaved prM would play a role in immune evasion. Its function is as follows. May play a role in virus budding. Exerts cytotoxic effects by activating a mitochondrial apoptotic pathway through M ectodomain. May display a viroporin activity. Functionally, binds to host cell surface receptor and mediates fusion between viral and cellular membranes. Envelope protein is synthesized in the endoplasmic reticulum in the form of heterodimer with protein prM. They play a role in virion budding in the ER, and the newly formed immature particle is covered with 60 spikes composed of heterodimer between precursor prM and envelope protein E. The virion is transported to the Golgi apparatus where the low pH causes dissociation of PrM-E heterodimers and formation of E homodimers. prM-E cleavage is inefficient, and many virions are only partially matured. These uncleaved prM would play a role in immune evasion. In terms of biological role, involved in immune evasion, pathogenesis and viral replication. Once cleaved off the polyprotein, is targeted to three destinations: the viral replication cycle, the plasma membrane and the extracellular compartment. Essential for viral replication. Required for formation of the replication complex and recruitment of other non-structural proteins to the ER-derived membrane structures. Excreted as a hexameric lipoparticle that plays a role against host immune response. Antagonizing the complement function. Binds to the host macrophages and dendritic cells. Inhibits signal transduction originating from Toll-like receptor 3 (TLR3). Mediates complement activation, which may contribute to the pathogenesis of the vascular leakage that occurs in severe dengue disease. Activates autophagy through the AMPK/ERK/mTOR signaling pathway. Mechanistically, acts as the assembly platform for STK11-AMPK interactions and promotes STK11-AMPK interactions. In turn, promotes phosphorylation of the AMPK kinase structural domain and activates AMPK, thereby positively regulating the AMPK/ERK/mTOR signaling pathway and inducing autophagy. Disrupts the host endothelial glycocalyx layer of host pulmonary microvascular endothelial cells, inducing degradation of sialic acid and shedding of heparan sulfate proteoglycans. NS1 induces expression of sialidases, heparanase, and activates cathepsin L, which activates heparanase via enzymatic cleavage. These effects are probably linked to the endothelial hyperpermeability observed in severe dengue disease. Its function is as follows. Component of the viral RNA replication complex that functions in virion assembly and antagonizes the host immune response. Functionally, required cofactor for the serine protease function of NS3. May have membrane-destabilizing activity and form viroporins. In terms of biological role, displays three enzymatic activities: serine protease, NTPase and RNA helicase. NS3 serine protease, in association with NS2B, performs its autocleavage and cleaves the polyprotein at dibasic sites in the cytoplasm: C-prM, NS2A-NS2B, NS2B-NS3, NS3-NS4A, NS4A-2K and NS4B-NS5. NS3 RNA helicase binds RNA and unwinds dsRNA in the 3' to 5' direction. Regulates the ATPase activity of the NS3 helicase activity. NS4A allows NS3 helicase to conserve energy during unwinding. Plays a role in the inhibition of the host innate immune response. Interacts with host MAVS and thereby prevents the interaction between RIGI and MAVS. In turn, IFN-beta production is impaired. Interacts with host AUP1 which mediates induction of lipophagy in host cells and facilitates production of virus progeny particles. Its function is as follows. Functions as a signal peptide for NS4B and is required for the interferon antagonism activity of the latter. Functionally, induces the formation of ER-derived membrane vesicles where the viral replication takes place. Inhibits interferon (IFN)-induced host STAT1 phosphorylation and nuclear translocation, thereby preventing the establishment of cellular antiviral state by blocking the IFN-alpha/beta pathway. In terms of biological role, replicates the viral (+) and (-) RNA genome, and performs the capping of genomes in the cytoplasm. NS5 methylates viral RNA cap at guanine N-7 and ribose 2'-O positions. Besides its role in RNA genome replication, also prevents the establishment of cellular antiviral state by blocking the interferon-alpha/beta (IFN-alpha/beta) signaling pathway. Inhibits host TYK2 and STAT2 phosphorylation, thereby preventing activation of JAK-STAT signaling pathway. May reduce immune responses by preventing the recruitment of the host PAF1 complex to interferon-responsive genes. The protein is Genome polyprotein of Dengue virus type 2 (strain 16681-PDK53) (DENV-2).